A 309-amino-acid polypeptide reads, in one-letter code: Ribose-phosphate pyrophosphokinase (309 aa).

Residues 37–39 and 96–97 contribute to the ATP site; these read DGE and RQ. The Mg(2+) site is built by His130 and Asp169. Residue Lys192 is part of the active site. D-ribose 5-phosphate is bound by residues Arg194, Asp218, and 222–226; that span reads DTAGT.

Belongs to the ribose-phosphate pyrophosphokinase family. Class I subfamily. Homohexamer. Requires Mg(2+) as cofactor.

It localises to the cytoplasm. It catalyses the reaction D-ribose 5-phosphate + ATP = 5-phospho-alpha-D-ribose 1-diphosphate + AMP + H(+). It functions in the pathway metabolic intermediate biosynthesis; 5-phospho-alpha-D-ribose 1-diphosphate biosynthesis; 5-phospho-alpha-D-ribose 1-diphosphate from D-ribose 5-phosphate (route I): step 1/1. Involved in the biosynthesis of the central metabolite phospho-alpha-D-ribosyl-1-pyrophosphate (PRPP) via the transfer of pyrophosphoryl group from ATP to 1-hydroxyl of ribose-5-phosphate (Rib-5-P). This chain is Ribose-phosphate pyrophosphokinase, found in Campylobacter jejuni subsp. jejuni serotype O:2 (strain ATCC 700819 / NCTC 11168).